Consider the following 157-residue polypeptide: MKVELCSFSGYKIYPGHGRRYARIDGKVFQFLNAKCESAFLAKRNPRQINWTVLYRRKHKKGQSEEVAKKRTRRAVKFQRAITGASLAEIMAKRNQKPEVRKAQREQAIRAAKEAKKAKQAAKKPAAPSAKASTKTAQKPKIAKPMKISAPRVGGKR.

Positions 94–157 are disordered; sequence RNQKPEVRKA…ISAPRVGGKR (64 aa). Positions 96 to 117 are enriched in basic and acidic residues; it reads QKPEVRKAQREQAIRAAKEAKK. Over residues 123–140 the composition is skewed to low complexity; it reads KKPAAPSAKASTKTAQKP.

It belongs to the eukaryotic ribosomal protein eL24 family. In terms of assembly, component of the large ribosomal subunit.

It is found in the cytoplasm. Functionally, component of the large ribosomal subunit. The ribosome is a large ribonucleoprotein complex responsible for the synthesis of proteins in the cell. The chain is Large ribosomal subunit protein eL24 (rpl24) from Pagrus major (Red sea bream).